A 471-amino-acid chain; its full sequence is Tryptophanase (471 aa).

N6-acetyllysine is present on residues Lys5, Lys115, and Lys156. Lys270 carries the N6-(pyridoxal phosphate)lysine modification. Lys450 carries the post-translational modification N6-acetyllysine.

Belongs to the beta-eliminating lyase family. In terms of assembly, homotetramer. It depends on pyridoxal 5'-phosphate as a cofactor.

The catalysed reaction is L-tryptophan + H2O = indole + pyruvate + NH4(+). The protein operates within amino-acid degradation; L-tryptophan degradation via pyruvate pathway; indole and pyruvate from L-tryptophan: step 1/1. In Escherichia coli O6:H1 (strain CFT073 / ATCC 700928 / UPEC), this protein is Tryptophanase.